Here is a 157-residue protein sequence, read N- to C-terminus: Crossover junction endodeoxyribonuclease RuvC (157 aa).

Catalysis depends on residues Asp7, Glu67, and Asp140. Residues Asp7, Glu67, and Asp140 each contribute to the Mg(2+) site.

It belongs to the RuvC family. In terms of assembly, homodimer which binds Holliday junction (HJ) DNA. The HJ becomes 2-fold symmetrical on binding to RuvC with unstacked arms; it has a different conformation from HJ DNA in complex with RuvA. In the full resolvosome a probable DNA-RuvA(4)-RuvB(12)-RuvC(2) complex forms which resolves the HJ. Mg(2+) serves as cofactor.

It localises to the cytoplasm. The catalysed reaction is Endonucleolytic cleavage at a junction such as a reciprocal single-stranded crossover between two homologous DNA duplexes (Holliday junction).. Its function is as follows. The RuvA-RuvB-RuvC complex processes Holliday junction (HJ) DNA during genetic recombination and DNA repair. Endonuclease that resolves HJ intermediates. Cleaves cruciform DNA by making single-stranded nicks across the HJ at symmetrical positions within the homologous arms, yielding a 5'-phosphate and a 3'-hydroxyl group; requires a central core of homology in the junction. The consensus cleavage sequence is 5'-(A/T)TT(C/G)-3'. Cleavage occurs on the 3'-side of the TT dinucleotide at the point of strand exchange. HJ branch migration catalyzed by RuvA-RuvB allows RuvC to scan DNA until it finds its consensus sequence, where it cleaves and resolves the cruciform DNA. This is Crossover junction endodeoxyribonuclease RuvC from Rickettsia bellii (strain OSU 85-389).